A 488-amino-acid chain; its full sequence is MEHQELNELVKVRLEKLSELRKMGIEPYGGKFERTHTAKEILDNFEQLVDKTVKIAGRIMAKRGHGKASFAHIQDMSGKIQIYARQNELGIDAYKLFEKLDIGDIIGVTGHVFKTQKGEITVWLSSFEILAKSLRPLPEKWHGLTDVELRYRQRYVDLIVNPEVRETFILRSRIVKTIREFLDQKGFLEVETPMMHPIAGGAAARPFITHHNALDMKLYLRIAPELYLKRLLVGGFEKVYEINRNFRNEGISTKHNPEFTMLELYQAYADYHDMMDITEELITHVAEKVLGTLEITYQGTPINLHRPWKRIPMLKAIEEATGVDFAGVKDPVQAYAKAKELGVPVEEGMGWGEIITAVFEEKVEPTLINPTFVIDYPVEVSPLAKRQKENPDLTYRFELFIYGREMANAFSELNDPIDQKERFLKQLEARAKGNEEAHMMDEDYITALEYGMPPAGGLGIGIDRLVMLLTDQASIRDVILFPLMRPRD.

Mg(2+)-binding residues include glutamate 398 and glutamate 405.

It belongs to the class-II aminoacyl-tRNA synthetase family. In terms of assembly, homodimer. Mg(2+) is required as a cofactor.

It is found in the cytoplasm. The enzyme catalyses tRNA(Lys) + L-lysine + ATP = L-lysyl-tRNA(Lys) + AMP + diphosphate. The sequence is that of Lysine--tRNA ligase from Carboxydothermus hydrogenoformans (strain ATCC BAA-161 / DSM 6008 / Z-2901).